Here is a 226-residue protein sequence, read N- to C-terminus: Neuromodulin (226 aa).

Residues 1–226 (MLCCMRRTKQ…EDPEADQEHA (226 aa)) form a disordered region. S-palmitoyl cysteine attachment occurs at residues Cys-3 and Cys-4. A compositionally biased stretch (basic and acidic residues) spans 9–32 (KQVEKNDEDQKIEQDGVKPEDKAH). In terms of domain architecture, IQ spans 31–60 (AHKAATKIQASFRGHITRKKLKDEKKGDAP). Residue Ser-41 is modified to Phosphoserine; by PHK and PKC. Residues 51–84 (LKDEKKGDAPAAEAEAKEKDDAPVADGVEKKEGD) show a composition bias toward basic and acidic residues. Low complexity predominate over residues 85-97 (GSATTDAAPATSP). Ser-86 and Ser-96 each carry phosphoserine. Positions 98–127 (KAEEPSKAGDAPSEEKKGEGDAAPSEEKAG) are enriched in basic and acidic residues. Positions 128–139 (SAETESAAKATT) are enriched in low complexity. Phosphoserine is present on residues Ser-142, Ser-144, and Ser-145. Residues 146–158 (KAEDGPAKEEPKQ) are compositionally biased toward basic and acidic residues. Positions 159-192 (ADVPAAVTDAAATTPAAEDAAKAAQPPTETAESS) are enriched in low complexity. A Phosphothreonine modification is found at Thr-172. Phosphoserine occurs at positions 191 and 192. The span at 201–214 (VDEAKPKESARQDE) shows a compositional bias: basic and acidic residues. The segment covering 215 to 226 (GKEDPEADQEHA) has biased composition (acidic residues).

Belongs to the neuromodulin family. Identified in a complex containing FGFR4, NCAM1, CDH2, PLCG1, FRS2, SRC, SHC1, GAP43 and CTTN. Interacts (via IQ domain) with calmodulin. Binds calmodulin with a greater affinity in the absence of Ca(2+) than in its presence. Post-translationally, phosphorylated. Phosphorylation of this protein by a protein kinase C is specifically correlated with certain forms of synaptic plasticity. In terms of processing, palmitoylated by ZDHHC3. Palmitoylation is regulated by ARF6 and is essential for plasma membrane association and axonal and dendritic filopodia induction. Deacylated by LYPLA2. As to expression, expressed in hippocampal neurons, with highest levels of expression in the CA4 and CA3 neurons and lower levels in CA1 neurons. Expressed in the dorsal root ganglion.

The protein localises to the cell membrane. The protein resides in the cell projection. Its subcellular location is the growth cone. It is found in the growth cone membrane. It localises to the synapse. The protein localises to the filopodium membrane. The protein resides in the perikaryon. Its subcellular location is the dendrite. It is found in the axon. It localises to the cytoplasm. Its function is as follows. This protein is associated with nerve growth. It is a major component of the motile 'growth cones' that form the tips of elongating axons. Plays a role in axonal and dendritic filopodia induction. This is Neuromodulin (Gap43) from Rattus norvegicus (Rat).